Reading from the N-terminus, the 629-residue chain is 1-deoxy-D-xylulose-5-phosphate synthase (629 aa).

Thiamine diphosphate contacts are provided by residues His85 and 126-128 (GHS). Asp157 contributes to the Mg(2+) binding site. Thiamine diphosphate is bound by residues 158-159 (GS), Asn186, Tyr293, and Glu373. Asn186 provides a ligand contact to Mg(2+).

It belongs to the transketolase family. DXPS subfamily. In terms of assembly, homodimer. Mg(2+) serves as cofactor. It depends on thiamine diphosphate as a cofactor.

The enzyme catalyses D-glyceraldehyde 3-phosphate + pyruvate + H(+) = 1-deoxy-D-xylulose 5-phosphate + CO2. The protein operates within metabolic intermediate biosynthesis; 1-deoxy-D-xylulose 5-phosphate biosynthesis; 1-deoxy-D-xylulose 5-phosphate from D-glyceraldehyde 3-phosphate and pyruvate: step 1/1. Functionally, catalyzes the acyloin condensation reaction between C atoms 2 and 3 of pyruvate and glyceraldehyde 3-phosphate to yield 1-deoxy-D-xylulose-5-phosphate (DXP). The chain is 1-deoxy-D-xylulose-5-phosphate synthase from Helicobacter hepaticus (strain ATCC 51449 / 3B1).